Here is a 238-residue protein sequence, read N- to C-terminus: Small ribosomal subunit protein eS4 (238 aa).

Residues 38 to 100 (LPLAIVIRDV…TGEVYRVVPD (63 aa)) form the S4 RNA-binding domain.

The protein belongs to the eukaryotic ribosomal protein eS4 family.

This Pyrobaculum arsenaticum (strain DSM 13514 / JCM 11321 / PZ6) protein is Small ribosomal subunit protein eS4.